Reading from the N-terminus, the 902-residue chain is Inter-alpha-trypsin inhibitor heavy chain H1 (902 aa).

The signal sequence occupies residues Met-1 to Gly-28. The VIT domain maps to Ser-29–Glu-158. Cys-52 carries an S-linked (Hex...) cysteine glycan. N-linked (GlcNAc...) asparagine glycosylation occurs at Asn-69. Phosphoserine is present on Ser-121. Residue Asn-277 is glycosylated (N-linked (GlcNAc...) asparagine). A VWFA domain is found at Asn-282–Glu-442. 2 positions are modified to phosphothreonine: Thr-394 and Thr-399. Residues Ser-637–Gln-651 show a composition bias toward polar residues. The interval Ser-637–Arg-656 is disordered. Residue Ser-639 is glycosylated (O-linked (GalNAc...) serine). A glycan (O-linked (GalNAc...) threonine) is linked at Thr-644. The residue at position 663 (Asp-663) is an Aspartate 1-(chondroitin 4-sulfate)-ester. A propeptide spanning residues Pro-664–Phe-902 is cleaved from the precursor. Residue Asn-741 is glycosylated (N-linked (GlcNAc...) asparagine).

It belongs to the ITIH family. I-alpha-I plasma protease inhibitors are assembled from one or two heavy chains (HC) and one light chain, bikunin. Inter-alpha-inhibitor (I-alpha-I) is composed of ITIH1/HC1, ITIH2/HC2 and bikunin. Interacts with TNFAIP6 (via Link and CUB domains). Heavy chains are linked to bikunin via chondroitin 4-sulfate esterified to the alpha-carboxyl of the C-terminal aspartate after propeptide cleavage. Post-translationally, the S-linked glycan is composed of two 6-carbon sugars, possibly Glc or Gal.

It localises to the secreted. Functionally, may act as a carrier of hyaluronan in serum or as a binding protein between hyaluronan and other matrix protein, including those on cell surfaces in tissues to regulate the localization, synthesis and degradation of hyaluronan which are essential to cells undergoing biological processes. This chain is Inter-alpha-trypsin inhibitor heavy chain H1 (ITIH1), found in Sus scrofa (Pig).